We begin with the raw amino-acid sequence, 170 residues long: Protein-lysine myristoyltransferase HlyC (170 aa).

Active-site residues include His23 and Asp92. A heme-binding site is contributed by His151.

The protein belongs to the RTX toxin acyltransferase family. Monomer. In terms of processing, proteolytically cleaved by the protease systems ClpAP, ClpXP and FtsH, leading to its degradation.

The protein localises to the cytoplasm. It catalyses the reaction tetradecanoyl-[ACP] + L-lysyl-[protein] = N(6)-tetradecanoyl-L-lysyl-[protein] + holo-[ACP] + H(+). Its activity is regulated as follows. The acyltransferase activity is inhibited by heme. In terms of biological role, protein-lysine myristoyltransferase that catalyzes myristoylation of the protoxin (HlyA) at two internal lysine residues, thereby converting it to the active toxin. The sequence is that of Protein-lysine myristoyltransferase HlyC from Escherichia coli.